The following is a 352-amino-acid chain: B1 bradykinin receptor (352 aa).

Topologically, residues 1 to 41 (MASWPPLQLQSSNQSQLFPQNATACDNAPEAWDLLHRVLPT) are extracellular. Asparagine 13 and asparagine 21 each carry an N-linked (GlcNAc...) asparagine glycan. The chain crosses the membrane as a helical span at residues 42 to 62 (FIISICSFGLLGNLFVLLVFL). Over 63–72 (LPRRRLNVAE) the chain is Cytoplasmic. The helical transmembrane segment at 73–93 (IYLANLAASDLVFVLGLPFWA) threads the bilayer. The Extracellular portion of the chain corresponds to 94–110 (ENIWNQFNWPFGALLCR). Cysteine 109 and cysteine 188 are disulfide-bonded. The helical transmembrane segment at 111 to 131 (VINGIIKANLFISIFLVVAIS) threads the bilayer. The Cytoplasmic segment spans residues 132-153 (QDRYCVLVHPMASRRRQRRRQA). A helical transmembrane segment spans residues 154–174 (RVTCVLIWVVGGLLSIPTFLL). At 175–206 (RSIQAVPDLNITACILLLPHEAWHFARIVELN) the chain is on the extracellular side. An N-linked (GlcNAc...) asparagine glycan is attached at asparagine 184. A helical transmembrane segment spans residues 207–227 (ILAFLLPLAAIIFFNYHILAS). Residues 228 to 250 (LRGREEVSRTRCGGSKDSKTTAL) are Cytoplasmic-facing. A helical membrane pass occupies residues 251–271 (ILTLVVAFLVCWAPYHFFAFL). Residues 272–294 (EFLFQVQAVRGCFWEDFIDLGLQ) lie on the Extracellular side of the membrane. Residues 295 to 315 (LANFLAFTNSSLNPVIYVFAG) form a helical membrane-spanning segment. Residues 316–352 (RLFRTKVWELYKQCTPKSLAPISSSHRKEIFQLFWRN) lie on the Cytoplasmic side of the membrane. A lipid anchor (S-palmitoyl cysteine) is attached at cysteine 329.

It belongs to the G-protein coupled receptor 1 family. Bradykinin receptor subfamily. BDKRB1 sub-subfamily.

The protein resides in the cell membrane. This is a receptor for bradykinin. Could be a factor in chronic pain and inflammation. This chain is B1 bradykinin receptor (BDKRB1), found in Macaca fascicularis (Crab-eating macaque).